The chain runs to 128 residues: Small ribosomal subunit protein uS9 (128 aa).

The disordered stretch occupies residues 106–128; it reads SRKVERKKPGRPKARKKFQFSKR. Residues 109–128 show a composition bias toward basic residues; that stretch reads VERKKPGRPKARKKFQFSKR.

This sequence belongs to the universal ribosomal protein uS9 family.

The polypeptide is Small ribosomal subunit protein uS9 (Azobacteroides pseudotrichonymphae genomovar. CFP2).